The sequence spans 335 residues: Acetyl-coenzyme A carboxylase carboxyl transferase subunit alpha (335 aa).

The 261-residue stretch at 48–308 folds into the CoA carboxyltransferase C-terminal domain; sequence TLEKKVDALR…KGMLIEELKA (261 aa).

The protein belongs to the AccA family. In terms of assembly, acetyl-CoA carboxylase is a heterohexamer composed of biotin carboxyl carrier protein (AccB), biotin carboxylase (AccC) and two subunits each of ACCase subunit alpha (AccA) and ACCase subunit beta (AccD).

The protein localises to the cytoplasm. The enzyme catalyses N(6)-carboxybiotinyl-L-lysyl-[protein] + acetyl-CoA = N(6)-biotinyl-L-lysyl-[protein] + malonyl-CoA. It functions in the pathway lipid metabolism; malonyl-CoA biosynthesis; malonyl-CoA from acetyl-CoA: step 1/1. Functionally, component of the acetyl coenzyme A carboxylase (ACC) complex. First, biotin carboxylase catalyzes the carboxylation of biotin on its carrier protein (BCCP) and then the CO(2) group is transferred by the carboxyltransferase to acetyl-CoA to form malonyl-CoA. The protein is Acetyl-coenzyme A carboxylase carboxyl transferase subunit alpha of Chlorobium luteolum (strain DSM 273 / BCRC 81028 / 2530) (Pelodictyon luteolum).